The chain runs to 640 residues: Threonine--tRNA ligase (640 aa).

In terms of domain architecture, TGS spans 1-59 (MKIKVKLPDGKEKEYDRGITPAEIAKELGVKKAIGAVVNGELWDLKRPIENDCELRLVT). Residues 240–531 (DHRKLGPHLE…LIEHFAGAFP (292 aa)) are catalytic. Zn(2+) is bound by residues Cys-332, His-383, and His-508.

The protein belongs to the class-II aminoacyl-tRNA synthetase family. As to quaternary structure, homodimer. Zn(2+) is required as a cofactor.

Its subcellular location is the cytoplasm. The catalysed reaction is tRNA(Thr) + L-threonine + ATP = L-threonyl-tRNA(Thr) + AMP + diphosphate + H(+). Functionally, catalyzes the attachment of threonine to tRNA(Thr) in a two-step reaction: L-threonine is first activated by ATP to form Thr-AMP and then transferred to the acceptor end of tRNA(Thr). Also edits incorrectly charged L-seryl-tRNA(Thr). This is Threonine--tRNA ligase from Thermotoga sp. (strain RQ2).